A 479-amino-acid chain; its full sequence is Xylose isomerase (479 aa).

H144 is an active-site residue. Mn(2+) contacts are provided by E275, E311, H314, D339, D350, D352, and Y382.

It belongs to the xylose isomerase family. As to quaternary structure, homodimer. Mn(2+) is required as a cofactor.

It catalyses the reaction alpha-D-xylose = alpha-D-xylulofuranose. This is Xylose isomerase (XYLA) from Hordeum vulgare (Barley).